Here is a 199-residue protein sequence, read N- to C-terminus: Holliday junction branch migration complex subunit RuvA (199 aa).

Positions 1-63 are domain I; the sequence is MIGKLNGKID…EEHIHLYGFL (63 aa). The interval 64–141 is domain II; sequence TLEEKNFFNL…TKIFSSSAII (78 aa). The interval 141–145 is flexible linker; it reads IKDSN. Positions 146–199 are domain III; the sequence is ISSIAINEVMKALVNLGFTRFEAQNTVQGIITQNPKISIDELIKTALKNRNSSF.

The protein belongs to the RuvA family. Homotetramer. Forms an RuvA(8)-RuvB(12)-Holliday junction (HJ) complex. HJ DNA is sandwiched between 2 RuvA tetramers; dsDNA enters through RuvA and exits via RuvB. An RuvB hexamer assembles on each DNA strand where it exits the tetramer. Each RuvB hexamer is contacted by two RuvA subunits (via domain III) on 2 adjacent RuvB subunits; this complex drives branch migration. In the full resolvosome a probable DNA-RuvA(4)-RuvB(12)-RuvC(2) complex forms which resolves the HJ.

Its subcellular location is the cytoplasm. In terms of biological role, the RuvA-RuvB-RuvC complex processes Holliday junction (HJ) DNA during genetic recombination and DNA repair, while the RuvA-RuvB complex plays an important role in the rescue of blocked DNA replication forks via replication fork reversal (RFR). RuvA specifically binds to HJ cruciform DNA, conferring on it an open structure. The RuvB hexamer acts as an ATP-dependent pump, pulling dsDNA into and through the RuvAB complex. HJ branch migration allows RuvC to scan DNA until it finds its consensus sequence, where it cleaves and resolves the cruciform DNA. The protein is Holliday junction branch migration complex subunit RuvA of Rickettsia prowazekii (strain Madrid E).